Reading from the N-terminus, the 1181-residue chain is Clustered mitochondria protein homolog (1181 aa).

Residues 165-195 (AKAEALAKNEEVSEDEESEPEDDTPMKQSTQ) are disordered. Residues 176–187 (VSEDEESEPEDD) are compositionally biased toward acidic residues. The 244-residue stretch at 379-622 (DMARNQELLS…RLAPVDIAFL (244 aa)) folds into the Clu domain. Residues 1130–1181 (GRLARQAPKPTATHQKEAPKKASKKTKGKGKGKDDKGEKLVAELKKKKAGKR) form a disordered region. The span at 1150-1159 (KASKKTKGKG) shows a compositional bias: basic residues. The span at 1160–1173 (KGKDDKGEKLVAEL) shows a compositional bias: basic and acidic residues.

The protein belongs to the CLU family. As to quaternary structure, may associate with the eukaryotic translation initiation factor 3 (eIF-3) complex.

The protein localises to the cytoplasm. Functionally, mRNA-binding protein involved in proper cytoplasmic distribution of mitochondria. This Yarrowia lipolytica (strain CLIB 122 / E 150) (Yeast) protein is Clustered mitochondria protein homolog.